The sequence spans 356 residues: Alternative oxidase, mitochondrial (356 aa).

The helical transmembrane segment at 152 to 172 threads the bilayer; it reads VIRFIFLETVAGVPGMVGGML. Positions 159, 198, and 201 each coordinate Fe cation. A helical membrane pass occupies residues 217–237; it reads LMVLGAQGVFFNGFFISYLIS. Glu-249, Glu-304, and His-307 together coordinate Fe cation. A disordered region spans residues 330–356; sequence YDNPEAPHPTKSAEIVKPTGWERDEVI.

The protein belongs to the alternative oxidase family. Requires Fe cation as cofactor.

The protein resides in the mitochondrion inner membrane. Functionally, catalyzes cyanide-resistant oxygen consumption. May increase respiration when the cytochrome respiratory pathway is restricted, or in response to low temperatures. The protein is Alternative oxidase, mitochondrial (AOX1) of Ajellomyces capsulatus (Darling's disease fungus).